The following is an 82-amino-acid chain: Polyketide biosynthesis acyl-carrier-protein AcpK (82 aa).

The 76-residue stretch at 4 to 79 folds into the Carrier domain; the sequence is QRIFEVLITN…ELAEVLYDKV (76 aa). Ser-39 carries the O-(pantetheine 4'-phosphoryl)serine modification.

In terms of processing, 4'-phosphopantetheine is transferred from CoA to a specific serine of apo-ACP by sfp.

It localises to the cytoplasm. It participates in antibiotic biosynthesis; bacillaene biosynthesis. Involved in some intermediate steps for the synthesis of the antibiotic polyketide bacillaene which is involved in secondary metabolism. The protein is Polyketide biosynthesis acyl-carrier-protein AcpK (acpK) of Bacillus subtilis (strain 168).